The primary structure comprises 141 residues: Large ribosomal subunit protein uL16 (141 aa).

This sequence belongs to the universal ribosomal protein uL16 family. As to quaternary structure, part of the 50S ribosomal subunit. Contacts the CTC protein (RL25).

Functionally, binds the 5S and 23S rRNAs and is also seen to make contacts with the A and P site tRNAs. Interacts with A site tRNA mimics, and is probably one of the key factors, along with a helix of the 23S rRNA, in positioning tRNA stems in the peptidyl-transferase center. The sequence is that of Large ribosomal subunit protein uL16 (rplP) from Deinococcus radiodurans (strain ATCC 13939 / DSM 20539 / JCM 16871 / CCUG 27074 / LMG 4051 / NBRC 15346 / NCIMB 9279 / VKM B-1422 / R1).